We begin with the raw amino-acid sequence, 170 residues long: Adenine phosphoribosyltransferase (170 aa).

It belongs to the purine/pyrimidine phosphoribosyltransferase family. As to quaternary structure, homodimer.

The protein localises to the cytoplasm. It carries out the reaction AMP + diphosphate = 5-phospho-alpha-D-ribose 1-diphosphate + adenine. The protein operates within purine metabolism; AMP biosynthesis via salvage pathway; AMP from adenine: step 1/1. Its function is as follows. Catalyzes a salvage reaction resulting in the formation of AMP, that is energically less costly than de novo synthesis. The chain is Adenine phosphoribosyltransferase from Halothermothrix orenii (strain H 168 / OCM 544 / DSM 9562).